A 95-amino-acid polypeptide reads, in one-letter code: Large ribosomal subunit protein uL23 (95 aa).

The protein belongs to the universal ribosomal protein uL23 family. In terms of assembly, part of the 50S ribosomal subunit. Contacts protein L29, and trigger factor when it is bound to the ribosome.

Functionally, one of the early assembly proteins it binds 23S rRNA. One of the proteins that surrounds the polypeptide exit tunnel on the outside of the ribosome. Forms the main docking site for trigger factor binding to the ribosome. The chain is Large ribosomal subunit protein uL23 from Shouchella clausii (strain KSM-K16) (Alkalihalobacillus clausii).